Here is a 219-residue protein sequence, read N- to C-terminus: Large ribosomal subunit protein uL3 (219 aa).

The disordered stretch occupies residues Arg134–Gln153. Gln153 carries the post-translational modification N5-methylglutamine.

Belongs to the universal ribosomal protein uL3 family. Part of the 50S ribosomal subunit. Forms a cluster with proteins L14 and L19. Methylated by PrmB.

In terms of biological role, one of the primary rRNA binding proteins, it binds directly near the 3'-end of the 23S rRNA, where it nucleates assembly of the 50S subunit. The polypeptide is Large ribosomal subunit protein uL3 (Paraburkholderia phytofirmans (strain DSM 17436 / LMG 22146 / PsJN) (Burkholderia phytofirmans)).